The sequence spans 456 residues: tRNA-2-methylthio-N(6)-dimethylallyladenosine synthase (456 aa).

Residues 18–136 enclose the MTTase N-terminal domain; sequence EFFFIQTFGC…FPEYLHRVQV (119 aa). 6 residues coordinate [4Fe-4S] cluster: Cys27, Cys63, Cys97, Cys173, Cys177, and Cys180. A Radical SAM core domain is found at 159–391; sequence RKSNVKAFVT…AVNEGIVVGN (233 aa). In terms of domain architecture, TRAM spans 392-455; it reads KAAEGKIYEV…SFSLVGEVVE (64 aa).

Belongs to the methylthiotransferase family. MiaB subfamily. In terms of assembly, monomer. [4Fe-4S] cluster is required as a cofactor.

It localises to the cytoplasm. The catalysed reaction is N(6)-dimethylallyladenosine(37) in tRNA + (sulfur carrier)-SH + AH2 + 2 S-adenosyl-L-methionine = 2-methylsulfanyl-N(6)-dimethylallyladenosine(37) in tRNA + (sulfur carrier)-H + 5'-deoxyadenosine + L-methionine + A + S-adenosyl-L-homocysteine + 2 H(+). Its function is as follows. Catalyzes the methylthiolation of N6-(dimethylallyl)adenosine (i(6)A), leading to the formation of 2-methylthio-N6-(dimethylallyl)adenosine (ms(2)i(6)A) at position 37 in tRNAs that read codons beginning with uridine. The chain is tRNA-2-methylthio-N(6)-dimethylallyladenosine synthase from Clostridium botulinum (strain Alaska E43 / Type E3).